A 37-amino-acid chain; its full sequence is Protein YnaM (37 aa).

The helical transmembrane segment at 4–24 (ILIITSLLIIFSIFSHALIKL) threads the bilayer.

The protein resides in the cell inner membrane. The sequence is that of Protein YnaM from Escherichia coli (strain K12).